The sequence spans 815 residues: Cell division cycle protein 48 (815 aa).

The tract at residues 1–30 (MNAPSTMTDKKPEVEHLQGENPPKDTYSAE) is disordered. Basic and acidic residues predominate over residues 8-18 (TDKKPEVEHLQ). ATP-binding positions include 267 to 273 (PGTGKTL), asparagine 368, histidine 404, and 541 to 546 (GTGKTL). The interval 794–815 (DSADSNTNGPSFGNDGADDLYA) is disordered. The span at 795 to 804 (SADSNTNGPS) shows a compositional bias: polar residues.

Belongs to the AAA ATPase family. As to quaternary structure, component of the ribosome quality control complex (RQC), composed of the E3 ubiquitin ligase rkr1/ltn1, rqc1 and mtr1/rqc2, as well as cdc48 and its ubiquitin-binding cofactors. RQC forms a stable complex with 60S ribosomal subunits. Interacts with ubx2 and ubx3. Interacts with lub1. Interacts with rbd2 (via C-terminal SHP box); the interaction is required for rbd2-mediated cleavage of sre1 and sre2.

It localises to the cytoplasm. Its subcellular location is the nucleus. The enzyme catalyses ATP + H2O = ADP + phosphate + H(+). Its activity is regulated as follows. The first ATP-binding region has low ATPase activity. The second ATP-binding region is responsible for ATPase activity. ATP binding to the first ATP-binding region induces intrinsic activity of the second ATP-binding region. While ATP binding to the first ATP-binding region appears to prevent ATP hydrolysis by the second ATP-binding region, ADP-binding to first region promotes the coordinate and cooperative ATPase cycle of the second ATP-binding region. ATP binding to the first ATP-binding region induces a conformational change, promoting the rotation of the first ATP-binding region relative to the second ATP-binding region in the hexamer. In terms of biological role, ATP-dependent chaperone which probably uses the energy provided by ATP hydrolysis to generate mechanical force to unfold substrate proteins, disassemble protein complexes, and disaggregate protein aggregates. By recruiting and promoting the degradation of ubiquitinated proteins, plays a role in the ubiquitin fusion degradation (UFD) pathway. Has a role in the endoplasmic reticulum-associated degradation (ERAD) pathway which mediates the cytoplasmic elimination of misfolded proteins exported from the ER. Involved in spindle disassembly. Component of the ribosome quality control complex (RQC), a ribosome-associated complex that mediates ubiquitination and extraction of incompletely synthesized nascent chains for proteasomal degradation. CDC48 may provide the mechanical force that dislodges the polyubiquitinated nascent peptides from the exit channel. Required for ribophagy, a process which relocalizes ribosomal particles into the vacuole for degradation in response to starvation. Has a role in substrate recognition mediating rbd2-dependent cleavage of sterol regulatory element-binding protein sre1 and sre2. This Schizosaccharomyces pombe (strain 972 / ATCC 24843) (Fission yeast) protein is Cell division cycle protein 48.